The following is a 129-amino-acid chain: MAKAPIRARKRVRKTVSDGVAHIHASFNNTIVTITDRQGNALGWATAGGSGFRGSRKSTPFAAQVAAERCADAVKEYGIKNLEVMVKGPGPGRESTIRALNAAGFRITNITDVTPIPHNGCRPPKKRRV.

It belongs to the universal ribosomal protein uS11 family. Part of the 30S ribosomal subunit. Interacts with proteins S7 and S18. Binds to IF-3.

Its function is as follows. Located on the platform of the 30S subunit, it bridges several disparate RNA helices of the 16S rRNA. Forms part of the Shine-Dalgarno cleft in the 70S ribosome. The polypeptide is Small ribosomal subunit protein uS11 (Yersinia enterocolitica serotype O:8 / biotype 1B (strain NCTC 13174 / 8081)).